We begin with the raw amino-acid sequence, 206 residues long: dITP/XTP pyrophosphatase (206 aa).

7–12 (SCHGYK) lines the substrate pocket. Residue aspartate 70 is the Proton acceptor of the active site. Aspartate 70 contacts Mg(2+). Residues threonine 71, 154 to 157 (FGYD), lysine 177, and 182 to 183 (HR) contribute to the substrate site.

It belongs to the HAM1 NTPase family. Homodimer. Mg(2+) is required as a cofactor.

The catalysed reaction is XTP + H2O = XMP + diphosphate + H(+). It carries out the reaction dITP + H2O = dIMP + diphosphate + H(+). It catalyses the reaction ITP + H2O = IMP + diphosphate + H(+). Pyrophosphatase that catalyzes the hydrolysis of nucleoside triphosphates to their monophosphate derivatives, with a high preference for the non-canonical purine nucleotides XTP (xanthosine triphosphate), dITP (deoxyinosine triphosphate) and ITP. Seems to function as a house-cleaning enzyme that removes non-canonical purine nucleotides from the nucleotide pool, thus preventing their incorporation into DNA/RNA and avoiding chromosomal lesions. The chain is dITP/XTP pyrophosphatase from Chlamydia caviae (strain ATCC VR-813 / DSM 19441 / 03DC25 / GPIC) (Chlamydophila caviae).